Here is a 422-residue protein sequence, read N- to C-terminus: Histidine--tRNA ligase (422 aa).

Belongs to the class-II aminoacyl-tRNA synthetase family. As to quaternary structure, homodimer.

Its subcellular location is the cytoplasm. The enzyme catalyses tRNA(His) + L-histidine + ATP = L-histidyl-tRNA(His) + AMP + diphosphate + H(+). In Prosthecochloris aestuarii (strain DSM 271 / SK 413), this protein is Histidine--tRNA ligase.